Reading from the N-terminus, the 347-residue chain is Leucine-rich repeat-containing protein 69 (347 aa).

8 LRR repeats span residues 38–60 (GLKTLVLQNNLIPKVCPELCNLT), 61–82 (QLTTLNLGNNLLEEVPEEMKYL), 84–105 (SLKNLHLSGNRICRFAPGACDG), 108–129 (NLILLNLNNNHLTQLPQEVSRL), 131–153 (SLTYMSINYNQLASIPRELCFLE), 154–175 (NLVELQLNYNQLICIPEEIKFL), 177–199 (KLQKLLLARNNIGVLPEELCDLK), and 200–222 (KLRILDIAGNIIQIFPSGFQDLK).

The protein belongs to the LRRC69 family.

The protein is Leucine-rich repeat-containing protein 69 (LRRC69) of Homo sapiens (Human).